The following is a 335-amino-acid chain: Dolichyl-diphosphooligosaccharide--protein glycosyltransferase subunit MAGT1 (335 aa).

Residues 1–29 (MAARWRFWCVSVTMVVALLIVCDVPSASA) form the signal peptide. At 30-184 (QRKKEMVLSE…DVNIRVIRPP (155 aa)) the chain is on the extracellular side. Residues 47 to 175 (WTNKRPVIRM…IARWIADRTD (129 aa)) enclose the Thioredoxin domain. Asn71 is a glycosylation site (N-linked (GlcNAc...) asparagine). The cysteines at positions 87 and 90 are disulfide-linked. A helical membrane pass occupies residues 185-205 (NYAGPLMLGLLLAVIGGLVYL). Residues 206–209 (RRSN) lie on the Cytoplasmic side of the membrane. The helical transmembrane segment at 210 to 230 (MEFLFNKTGWAFAALCFVLAM) threads the bilayer. The Extracellular portion of the chain corresponds to 231 to 270 (TSGQMWNHIRGPPYAHKNPHTGHVNYIHGSSQAQFVAETH). A helical transmembrane segment spans residues 271-291 (IVLLFNGGVTLGMVLLCEAAT). Residues 292–300 (SDMDIGKRK) are Cytoplasmic-facing. A helical membrane pass occupies residues 301-321 (IMCVAGIGLVVLFFSWMLSIF). Topologically, residues 322 to 335 (RSKYHGYPYSFLMS) are extracellular.

This sequence belongs to the OST3/OST6 family. As to quaternary structure, accessory component of the STT3B-containing form of the oligosaccharyltransferase (OST) complex. OST exists in two different complex forms which contain common core subunits RPN1, RPN2, OST48, OST4, DAD1 and TMEM258, either STT3A or STT3B as catalytic subunits, and form-specific accessory subunits. OST can form stable complexes with the Sec61 complex or with both the Sec61 and TRAP complexes. The association of TUSC3 or MAGT1 with the STT3B-containing complex seems to be mutually exclusvice. Ubiquitous. Expressed at very low levels in brain, lung and kidney.

Its subcellular location is the cell membrane. The protein resides in the endoplasmic reticulum. It localises to the endoplasmic reticulum membrane. The protein operates within protein modification; protein glycosylation. Functionally, accessory component of the STT3B-containing form of the N-oligosaccharyl transferase (OST) complex which catalyzes the transfer of a high mannose oligosaccharide from a lipid-linked oligosaccharide donor to an asparagine residue within an Asn-X-Ser/Thr consensus motif in nascent polypeptide chains. Involved in N-glycosylation of STT3B-dependent substrates. Specifically required for the glycosylation of a subset of acceptor sites that are near cysteine residues; in this function seems to act redundantly with TUSC3. In its oxidized form proposed to form transient mixed disulfides with a glycoprotein substrate to facilitate access of STT3B to the unmodified acceptor site. Also has oxidoreductase-independent functions in the STT3B-containing OST complex possibly involving substrate recognition. Could indirectly play a role in Mg(2+) transport in epithelial cells. In Homo sapiens (Human), this protein is Dolichyl-diphosphooligosaccharide--protein glycosyltransferase subunit MAGT1.